The sequence spans 477 residues: Glycogen synthase (477 aa).

Lys-15 contributes to the ADP-alpha-D-glucose binding site.

This sequence belongs to the glycosyltransferase 1 family. Bacterial/plant glycogen synthase subfamily.

It carries out the reaction [(1-&gt;4)-alpha-D-glucosyl](n) + ADP-alpha-D-glucose = [(1-&gt;4)-alpha-D-glucosyl](n+1) + ADP + H(+). It participates in glycan biosynthesis; glycogen biosynthesis. Synthesizes alpha-1,4-glucan chains using ADP-glucose. This chain is Glycogen synthase, found in Streptococcus pneumoniae serotype 4 (strain ATCC BAA-334 / TIGR4).